The chain runs to 239 residues: Proteasome subunit beta (239 aa).

A compositionally biased stretch (polar residues) spans 1 to 16; it reads MRQPDSSLPRTGQDHT. Residues 1–32 are disordered; the sequence is MRQPDSSLPRTGQDHTLSPYEPELGEVPSNDL. A propeptide spans 1–44 (removed in mature form; by autocatalysis); the sequence is MRQPDSSLPRTGQDHTLSPYEPELGEVPSNDLSMADLDNVNKTG. T45 acts as the Nucleophile in catalysis.

It belongs to the peptidase T1B family. The 20S proteasome core is composed of 14 alpha and 14 beta subunits that assemble into four stacked heptameric rings, resulting in a barrel-shaped structure. The two inner rings, each composed of seven catalytic beta subunits, are sandwiched by two outer rings, each composed of seven alpha subunits. The catalytic chamber with the active sites is on the inside of the barrel. Has a gated structure, the ends of the cylinder being occluded by the N-termini of the alpha-subunits. Is capped at one or both ends by the proteasome regulatory ATPase, PAN.

The protein resides in the cytoplasm. The catalysed reaction is Cleavage of peptide bonds with very broad specificity.. The formation of the proteasomal ATPase PAN-20S proteasome complex, via the docking of the C-termini of PAN into the intersubunit pockets in the alpha-rings, triggers opening of the gate for substrate entry. Interconversion between the open-gate and close-gate conformations leads to a dynamic regulation of the 20S proteasome proteolysis activity. Its function is as follows. Component of the proteasome core, a large protease complex with broad specificity involved in protein degradation. The polypeptide is Proteasome subunit beta (Natronomonas pharaonis (strain ATCC 35678 / DSM 2160 / CIP 103997 / JCM 8858 / NBRC 14720 / NCIMB 2260 / Gabara) (Halobacterium pharaonis)).